The primary structure comprises 35 residues: Dermonecrotic toxin LgSicTox-beta-LOXN4 (35 aa).

D20 contributes to the Mg(2+) binding site.

This sequence belongs to the arthropod phospholipase D family. Class II subfamily. Requires Mg(2+) as cofactor. Post-translationally, contains 2 disulfide bonds. Expressed by the venom gland.

The protein resides in the secreted. The catalysed reaction is an N-(acyl)-sphingosylphosphocholine = an N-(acyl)-sphingosyl-1,3-cyclic phosphate + choline. It catalyses the reaction an N-(acyl)-sphingosylphosphoethanolamine = an N-(acyl)-sphingosyl-1,3-cyclic phosphate + ethanolamine. It carries out the reaction a 1-acyl-sn-glycero-3-phosphocholine = a 1-acyl-sn-glycero-2,3-cyclic phosphate + choline. The enzyme catalyses a 1-acyl-sn-glycero-3-phosphoethanolamine = a 1-acyl-sn-glycero-2,3-cyclic phosphate + ethanolamine. In terms of biological role, dermonecrotic toxins cleave the phosphodiester linkage between the phosphate and headgroup of certain phospholipids (sphingolipid and lysolipid substrates), forming an alcohol (often choline) and a cyclic phosphate. This toxin acts on sphingomyelin (SM). It may also act on ceramide phosphoethanolamine (CPE), lysophosphatidylcholine (LPC) and lysophosphatidylethanolamine (LPE), but not on lysophosphatidylserine (LPS), and lysophosphatidylglycerol (LPG). It acts by transphosphatidylation, releasing exclusively cyclic phosphate products as second products. Induces dermonecrosis, hemolysis, increased vascular permeability, edema, inflammatory response, and platelet aggregation. The protein is Dermonecrotic toxin LgSicTox-beta-LOXN4 of Loxosceles gaucho (Spider).